A 151-amino-acid polypeptide reads, in one-letter code: Large ribosomal subunit protein bL9 (151 aa).

Belongs to the bacterial ribosomal protein bL9 family.

Its function is as follows. Binds to the 23S rRNA. The protein is Large ribosomal subunit protein bL9 of Lactobacillus johnsonii (strain CNCM I-12250 / La1 / NCC 533).